A 303-amino-acid polypeptide reads, in one-letter code: Cysteine synthase B (303 aa).

Lys-41 carries the post-translational modification N6-(pyridoxal phosphate)lysine. Residues Asn-71, 174-178 (GTTGT), and Ser-255 each bind pyridoxal 5'-phosphate.

This sequence belongs to the cysteine synthase/cystathionine beta-synthase family. Requires pyridoxal 5'-phosphate as cofactor.

The enzyme catalyses O-acetyl-L-serine + hydrogen sulfide = L-cysteine + acetate. It functions in the pathway amino-acid biosynthesis; L-cysteine biosynthesis; L-cysteine from L-serine: step 2/2. Its function is as follows. Two cysteine synthase enzymes are found. Both catalyze the same reaction. Cysteine synthase B can also use thiosulfate in place of sulfide to give cysteine thiosulfonate as a product. This Salmonella typhimurium (strain LT2 / SGSC1412 / ATCC 700720) protein is Cysteine synthase B (cysM).